Here is a 79-residue protein sequence, read N- to C-terminus: Acyl carrier protein (79 aa).

The region spanning 2–77 (STIEERVKKI…QAIDYVKAHV (76 aa)) is the Carrier domain. Position 37 is an O-(pantetheine 4'-phosphoryl)serine (Ser-37).

The protein belongs to the acyl carrier protein (ACP) family. 4'-phosphopantetheine is transferred from CoA to a specific serine of apo-ACP by AcpS. This modification is essential for activity because fatty acids are bound in thioester linkage to the sulfhydryl of the prosthetic group.

The protein resides in the cytoplasm. It participates in lipid metabolism; fatty acid biosynthesis. In terms of biological role, carrier of the growing fatty acid chain in fatty acid biosynthesis. In Xanthomonas axonopodis pv. citri (strain 306), this protein is Acyl carrier protein.